The chain runs to 395 residues: Acetate kinase (395 aa).

Asn7 provides a ligand contact to Mg(2+). Lys14 lines the ATP pocket. Residue Arg85 coordinates substrate. The Proton donor/acceptor role is filled by Asp142. ATP is bound by residues His202 to Gly206, Asp277 to Arg279, and Gly325 to Asn329. Position 378 (Glu378) interacts with Mg(2+).

This sequence belongs to the acetokinase family. In terms of assembly, homodimer. Mg(2+) is required as a cofactor. The cofactor is Mn(2+).

It is found in the cytoplasm. It catalyses the reaction acetate + ATP = acetyl phosphate + ADP. It functions in the pathway metabolic intermediate biosynthesis; acetyl-CoA biosynthesis; acetyl-CoA from acetate: step 1/2. Functionally, catalyzes the formation of acetyl phosphate from acetate and ATP. Can also catalyze the reverse reaction. This chain is Acetate kinase, found in Deinococcus geothermalis (strain DSM 11300 / CIP 105573 / AG-3a).